We begin with the raw amino-acid sequence, 367 residues long: Phosphoribosylaminoimidazole-succinocarboxamide synthase (367 aa).

It belongs to the SAICAR synthetase family.

The catalysed reaction is 5-amino-1-(5-phospho-D-ribosyl)imidazole-4-carboxylate + L-aspartate + ATP = (2S)-2-[5-amino-1-(5-phospho-beta-D-ribosyl)imidazole-4-carboxamido]succinate + ADP + phosphate + 2 H(+). Its pathway is purine metabolism; IMP biosynthesis via de novo pathway; 5-amino-1-(5-phospho-D-ribosyl)imidazole-4-carboxamide from 5-amino-1-(5-phospho-D-ribosyl)imidazole-4-carboxylate: step 1/2. In Shewanella putrefaciens (strain CN-32 / ATCC BAA-453), this protein is Phosphoribosylaminoimidazole-succinocarboxamide synthase.